The primary structure comprises 250 residues: MKRSYQALEPTLFFLMLMVIWEISARMIGQPYLLPSPIQIVMRTIDLSESLFFTHLPATLAIISIGLALSIVLGILLSLLMFWNERVERAVYPLLVASQTIPVIALAPIFVLWFGYSIWSKVAVTVLLTFFPITVNTYDGLKSTNRQYEELFYTMGATKRQLFYRLFVPSTLPSFLTGLRIAVPLAVIGAAVGEWLGANEGLGYFSRRMMTQFDGPGVFAPIFILSLLGILGFAAIKKLENILLPWRKKQ.

A run of 6 helical transmembrane segments spans residues 5–25, 62–82, 94–114, 115–135, 172–192, and 216–236; these read YQALEPTLFFLMLMVIWEISA, IISIGLALSIVLGILLSLLMF, LLVASQTIPVIALAPIFVLWF, GYSIWSKVAVTVLLTFFPITV, LPSFLTGLRIAVPLAVIGAAV, and PGVFAPIFILSLLGILGFAAI. An ABC transmembrane type-1 domain is found at 56 to 237; that stretch reads LPATLAIISI…LGILGFAAIK (182 aa).

This sequence belongs to the binding-protein-dependent transport system permease family. In terms of assembly, the complex is likely composed of an ATP-binding protein (ThiZ), a transmembrane protein (ThiX) and a solute-binding protein (ThiY).

Its subcellular location is the cell membrane. It functions in the pathway cofactor biosynthesis; thiamine diphosphate biosynthesis. Functionally, participates in a thiamine pyrimidine salvage pathway as part of the ABC transporter complex ThiXYZ involved in the import of thiamine degradation products such as the formylaminopyrimidine N-formyl-4-amino-5-aminomethyl-2-methylpyrimidine (FAMP). Is probably responsible for the translocation of the substrate across the membrane. The sequence is that of Formylaminopyrimidine transport permease protein ThiX from Halalkalibacterium halodurans (strain ATCC BAA-125 / DSM 18197 / FERM 7344 / JCM 9153 / C-125) (Bacillus halodurans).